The primary structure comprises 171 residues: Co-chaperone protein HscB homolog (171 aa).

The 73-residue stretch at 2 to 74 folds into the J domain; it reads NHFELFGLPP…ISRAEYLLSQ (73 aa).

The protein belongs to the HscB family. As to quaternary structure, interacts with HscA and stimulates its ATPase activity.

Functionally, co-chaperone involved in the maturation of iron-sulfur cluster-containing proteins. Seems to help targeting proteins to be folded toward HscA. The chain is Co-chaperone protein HscB homolog from Vibrio vulnificus (strain YJ016).